The chain runs to 104 residues: UPF0213 protein in VLF1-GP41 intergenic region (104 aa).

Residues Lys-9–Lys-89 form the GIY-YIG domain.

Belongs to the UPF0213 family.

In Autographa californica nuclear polyhedrosis virus (AcMNPV), this protein is UPF0213 protein in VLF1-GP41 intergenic region.